Consider the following 79-residue polypeptide: Cell division protein ZapB (79 aa).

Residues 1–78 (MSLEALDQLQ…LNSLLGKMDD (78 aa)) are a coiled coil.

This sequence belongs to the ZapB family. Homodimer. The ends of the coiled-coil dimer bind to each other, forming polymers. Interacts with FtsZ.

The protein localises to the cytoplasm. Its function is as follows. Non-essential, abundant cell division factor that is required for proper Z-ring formation. It is recruited early to the divisome by direct interaction with FtsZ, stimulating Z-ring assembly and thereby promoting cell division earlier in the cell cycle. Its recruitment to the Z-ring requires functional FtsA or ZipA. In Hamiltonella defensa subsp. Acyrthosiphon pisum (strain 5AT), this protein is Cell division protein ZapB.